The chain runs to 314 residues: FHA domain-containing protein DDL (314 aa).

The segment covering 1-10 (MAPSSRSPSP) has biased composition (low complexity). The disordered stretch occupies residues 1–146 (MAPSSRSPSP…NVEEDSVARM (146 aa)). Residues 18–127 (ARGEKEIGRS…AIASRHDEGS (110 aa)) are compositionally biased toward basic and acidic residues. A Phosphoserine modification is found at Ser133. An FHA domain is found at 219–282 (YLFGRERRIA…NKTYINESPI (64 aa)).

Interacts with DCL1 (via N-terminus). Expressed in roots, lateral roots, vascular strands of roots and leaves, vegetative meristems, pollen and developing seeds.

The protein localises to the nucleus. Involved in the microRNA (miRNA) and short interfering RNA (siRNA) biogenesis. May facilitate DCL1 to access or recognize primary miRNAs. Binds RNA non-specifically. This is FHA domain-containing protein DDL (DDL) from Arabidopsis thaliana (Mouse-ear cress).